The chain runs to 742 residues: Collectin-12 (742 aa).

The Cytoplasmic segment spans residues 1-37 (MKDDFAEEEEVQSFGYKRFGIQEGTQCTKCKNNWALK). Residues 38-58 (FSIILLYILCVLLTITIAILG) form a helical; Signal-anchor for type II membrane protein membrane-spanning segment. Residues 59–742 (YKVVEKMDNV…DMDKEQIFGV (684 aa)) lie on the Extracellular side of the membrane. Coiled-coil stretches lie at residues 71–101 (GLETSHRRYTEKLTEVESDLKKLDDQAGQKA) and 271–334 (NNSA…QLEE). Residues 439–605 (TILQGPPGPR…SEPTSVPEAN (167 aa)) are disordered. 2 Collagen-like domains span residues 467-526 (GQKG…SGDP) and 527-586 (GPPG…PGPP). Pro residues predominate over residues 475-492 (PGPPGPAGEKGPPGPIGP). 2 stretches are compositionally biased toward low complexity: residues 502–522 (RGSPGSKGQRGSPGKTGLPGP) and 532–556 (QGKDGPQGPQGPPGFQGLQGTVGEP). Pro residues predominate over residues 571-589 (PGLPGPKGPPGPPGPPGPG). Intrachain disulfides connect Cys-607–Cys-618, Cys-635–Cys-730, and Cys-708–Cys-722. In terms of domain architecture, C-type lectin spans 614 to 731 (YTEKCYYFSI…CEDVNNFICE (118 aa)). Residues Ile-644, Asn-646, Glu-650, Asp-670, and Glu-674 each contribute to the Ca(2+) site. A carbohydrate is bound by residues Lys-691, Gln-694, and Asp-696. Ca(2+) is bound by residues Gln-694, Asp-696, Asn-697, Glu-706, Asp-707, Asn-718, Asp-719, and Glu-731. Glu-706 lines the a carbohydrate pocket. Asn-718 and Asp-719 together coordinate a carbohydrate.

Widely expressed.

The protein resides in the membrane. Scavenger receptor that displays several functions associated with host defense. Binds to carbohydrates. The sequence is that of Collectin-12 (COLEC12) from Gallus gallus (Chicken).